We begin with the raw amino-acid sequence, 252 residues long: Enolase-phosphatase E1 (252 aa).

Mg(2+) contacts are provided by D18 and E20. Substrate contacts are provided by residues S149–S150 and K184. D209 contacts Mg(2+).

The protein belongs to the HAD-like hydrolase superfamily. MasA/MtnC family. As to quaternary structure, monomer. Mg(2+) is required as a cofactor.

It localises to the cytoplasm. It is found in the nucleus. It catalyses the reaction 5-methylsulfanyl-2,3-dioxopentyl phosphate + H2O = 1,2-dihydroxy-5-(methylsulfanyl)pent-1-en-3-one + phosphate. It participates in amino-acid biosynthesis; L-methionine biosynthesis via salvage pathway; L-methionine from S-methyl-5-thio-alpha-D-ribose 1-phosphate: step 3/6. Its pathway is amino-acid biosynthesis; L-methionine biosynthesis via salvage pathway; L-methionine from S-methyl-5-thio-alpha-D-ribose 1-phosphate: step 4/6. Functionally, bifunctional enzyme that catalyzes the enolization of 2,3-diketo-5-methylthiopentyl-1-phosphate (DK-MTP-1-P) into the intermediate 2-hydroxy-3-keto-5-methylthiopentenyl-1-phosphate (HK-MTPenyl-1-P), which is then dephosphorylated to form the acireductone 1,2-dihydroxy-3-keto-5-methylthiopentene (DHK-MTPene). This Naegleria gruberi (Amoeba) protein is Enolase-phosphatase E1.